Consider the following 218-residue polypeptide: Sodium channel regulatory subunit beta-1 (218 aa).

The first 18 residues, 1–18 (MGTLLALVVGAALVSSAW), serve as a signal peptide directing secretion. At 19-157 (GGCVEVDSET…DKANRDMASI (139 aa)) the chain is on the extracellular side. 2 cysteine pairs are disulfide-bonded: cysteine 21-cysteine 43 and cysteine 40-cysteine 121. Residues 22–150 (VEVDSETEAV…KIHIEVVDKA (129 aa)) enclose the Ig-like C2-type domain. Asparagine 93, asparagine 110, asparagine 114, and asparagine 135 each carry an N-linked (GlcNAc...) asparagine glycan. Residues 158–179 (VSEIMMYVLIVVLTIWLVAEMV) traverse the membrane as a helical segment. Residues 180 to 218 (YCYKKIAAATEAAAQENASEYLAITSESKENCTGVQVAE) lie on the Cytoplasmic side of the membrane.

This sequence belongs to the sodium channel auxiliary subunit SCN1B (TC 8.A.17) family. A voltage-gated sodium (Nav) channel consists of an ion-conducting pore-forming alpha subunit functional on its own that is regulated by one or more beta subunits. Interacts with SCN1A; regulatory subunit of SCN1A/Nav1.1. Interacts with SCN3A; regulatory subunit of SCN3A/Nav1.3. Interacts with SCN4A; regulatory subunit of SCN4A/Nav1.4. Interacts with SCN5A; regulatory subunit of SCN5A/Nav1.5. Interacts with SCN8A; regulatory subunit of SCN8A/Nav1.6. Interacts with SCN9A; regulatory subunit of SCN9A/Nav1.7. Interacts with SCN10A; regulatory subunit of SCN10A/Nav1.8. Interacts with NFASC. Interacts with TMEM65.

It localises to the cell membrane. Its subcellular location is the perikaryon. The protein localises to the cell projection. It is found in the axon. Regulatory subunit of multiple voltage-gated sodium (Nav) channels directly mediating the depolarization of excitable membranes. Navs, also called VGSCs (voltage-gated sodium channels) or VDSCs (voltage-dependent sodium channels), operate by switching between closed and open conformations depending on the voltage difference across the membrane. In the open conformation they allow Na(+) ions to selectively pass through the pore, along their electrochemical gradient. The influx of Na+ ions provokes membrane depolarization, initiating the propagation of electrical signals throughout cells and tissues. The accessory beta subunits participate in localization and functional modulation of the Nav channels. Modulates the activity of SCN1A/Nav1.1, SCN2A/Nav1.2, SCN3A/Nav1.3, SCN4A/Nav1.4, SCN5A/Nav1.5, SCN8A/Nav1.6, SCN9A/Nav1.7 and SCN10A/Nav1.8. The protein is Sodium channel regulatory subunit beta-1 of Canis lupus familiaris (Dog).